Reading from the N-terminus, the 327-residue chain is MSFVANPKIDPKSLGKVGVLYGGRSAEREISLMSGSGVLAALQSRGVDAHGFDPATQSVAELAAAGFDRVFIALHGRYGEDGTMQGLLEQLGVPYTGSGVLASALAMDKQATKRLWMTHDLSTPRFAMLYADTDFDAVVADLGLPLIVKPAREGSSIGLSKVTDASQMREAFEKAAALDNDVIAETFIDGAELTCPLVGEGATAEALPVIRIVAPDSNYDYQNKYFTDDTQYLCPSGLSAEVEREVQQLAVQAYRVLGCRGWARADVMLRADGKPFLLEMNTSPGMTGHSLVPMAARAAGISYEDFVMQVVAAATLDLHPNEHWKPE.

The ATP-grasp domain maps to Lys-113 to Ala-312. Val-139–Thr-194 is a binding site for ATP. Mg(2+) contacts are provided by Asp-266, Glu-279, and Asn-281.

The protein belongs to the D-alanine--D-alanine ligase family. The cofactor is Mg(2+). Mn(2+) is required as a cofactor.

It is found in the cytoplasm. It catalyses the reaction 2 D-alanine + ATP = D-alanyl-D-alanine + ADP + phosphate + H(+). It participates in cell wall biogenesis; peptidoglycan biosynthesis. Functionally, cell wall formation. This is D-alanine--D-alanine ligase from Cupriavidus pinatubonensis (strain JMP 134 / LMG 1197) (Cupriavidus necator (strain JMP 134)).